We begin with the raw amino-acid sequence, 218 residues long: Glutathione S-transferase A (218 aa).

An N-acetylserine modification is found at S1. Residues 2-82 form the GST N-terminal domain; the sequence is GKPVLHYFNV…YIATKYNLYG (81 aa). Position 3 is an N6-succinyllysine (K3). Residues Y8, K44, 53–54, and 66–67 each bind glutathione; these read QV and QS. The region spanning 84 to 206 is the GST C-terminal domain; sequence DTKERLLIDM…LQPGSQRKPF (123 aa).

It belongs to the GST superfamily. Alpha family. In terms of assembly, homodimer or heterodimer of GSTA1 and GSTA2.

Its subcellular location is the cytoplasm. It catalyses the reaction RX + glutathione = an S-substituted glutathione + a halide anion + H(+). The catalysed reaction is prostaglandin A2 + glutathione = prostaglandin A2-S-(R)-glutathione. The enzyme catalyses prostaglandin J2 + glutathione = prostaglandin J2-S-(R)-glutathione. It carries out the reaction (13S)-hydroperoxy-(9Z,11E)-octadecadienoate + 2 glutathione = (13S)-hydroxy-(9Z,11E)-octadecadienoate + glutathione disulfide + H2O. It catalyses the reaction androst-5-ene-3,17-dione = androst-4-ene-3,17-dione. Glutathione S-transferase that catalyzes the nucleophilic attack of the sulfur atom of glutathione on the electrophilic groups of a wide range of exogenous and endogenous compounds. Involved in the formation of glutathione conjugates of both prostaglandin A2 (PGA2) and prostaglandin J2 (PGJ2). It also catalyzes the isomerization of D5-androstene-3,17-dione (AD) into D4-androstene-3,17-dione and may therefore play an important role in hormone biosynthesis. Through its glutathione-dependent peroxidase activity toward the fatty acid hydroperoxide (13S)-hydroperoxy-(9Z,11E)-octadecadienoate/13-HPODE it is also involved in the metabolism of oxidized linoleic acid. This Cavia porcellus (Guinea pig) protein is Glutathione S-transferase A.